Consider the following 229-residue polypeptide: Cytosolic-abundant heat soluble protein 107838 (229 aa).

A disordered region spans residues 1-29 (MSAEAMNMNMNQDAVFIPPPEGEQYERKE). Positions 109-145 (LSANYQKEVERKTEAYRKQQEVEADKIRKELEKQHLR) form a coiled coil. CAHS motif stretches follow at residues 124-142 (YRKQ…LEKQ) and 161-179 (QKKM…MDRE). The span at 202–218 (SSAAGTETGGQVVSESQ) shows a compositional bias: polar residues. The interval 202–229 (SSAAGTETGGQVVSESQKFTERNRQIKQ) is disordered. A compositionally biased stretch (basic and acidic residues) spans 219–229 (KFTERNRQIKQ).

It belongs to the Cytosolic-abundant heat soluble protein (CAHS) family.

It localises to the cytoplasm. Functionally, CAHS proteins are cytosolic heat soluble proteins that seem to contribute to the anhydrobiosis in tardigrades, but their specific mechanisms are yet to be identified. It is possible that protection during anhydrobiosis might occur via the stabilization of vitrifying small molecules such as sugars, but not via the direct glass transition of CAHS proteins themselves. The chain is Cytosolic-abundant heat soluble protein 107838 from Paramacrobiotus richtersi (Water bear).